The sequence spans 404 residues: MLRYLTAGESHGEAIIGVLEGAPAQLPLTPDDINEHLARRWLGYGRGGRSKIENDTVHIYSGVRFGKTLGSPISFRIDNGAYEKDKAGWPEKMAIEGEPPEDMEKVTMPRPGHADLAGKQKYEHDDMRPVIDRSSARETAMRVACCSVARRLLNEFGIEVGSHVVRIGDVGFDEPEEWADRRNALIEEGGGASALYETADESATRMIDDGMTERCVEHIDQTKKDRDSLGGVYEVVVTGVPPGLGSYVHWDRRLDGQLVQAICSIQAQKAAEVGDGFFNAHRPGSQVHDPIEPREDGAQAYPRRTNHAGGTEGGTTTGMPLVVRGYMKPIPTLIKPLDSVDTATGEPEPTRYERSDITSVPAASTVAEATVAYTVANAFLRKYGGDSVPAIRRHVEADRAAPNE.

The NADP(+) site is built by R40 and R46. Residues 133–135 (RSS), 266–267 (QA), G313, 328–332 (KPIPT), and R354 contribute to the FMN site. Positions 283–320 (PGSQVHDPIEPREDGAQAYPRRTNHAGGTEGGTTTGMP) are disordered. Residues 337–357 (LDSVDTATGEPEPTRYERSDI) form a disordered region.

This sequence belongs to the chorismate synthase family. As to quaternary structure, homotetramer. The cofactor is FMNH2.

The enzyme catalyses 5-O-(1-carboxyvinyl)-3-phosphoshikimate = chorismate + phosphate. It participates in metabolic intermediate biosynthesis; chorismate biosynthesis; chorismate from D-erythrose 4-phosphate and phosphoenolpyruvate: step 7/7. In terms of biological role, catalyzes the anti-1,4-elimination of the C-3 phosphate and the C-6 proR hydrogen from 5-enolpyruvylshikimate-3-phosphate (EPSP) to yield chorismate, which is the branch point compound that serves as the starting substrate for the three terminal pathways of aromatic amino acid biosynthesis. This reaction introduces a second double bond into the aromatic ring system. This is Chorismate synthase from Salinibacter ruber (strain DSM 13855 / M31).